The sequence spans 133 residues: DNA-directed RNA polymerases I and III subunit RPAC2 (133 aa).

An N-acetylmethionine modification is found at methionine 1. The disordered stretch occupies residues 1 to 22 (MEEDQELERKMSGVKTSMAEGE).

This sequence belongs to the archaeal Rpo11/eukaryotic RPB11/RPC19 RNA polymerase subunit family. In terms of assembly, component of the RNA polymerase I and RNA polymerase III complexes consisting of at least 13 and 17 subunits, respectively. The transcriptionally active RNA polymerase III complex consists of a ten-subunit horseshoe-shaped catalytic core composed of POLR3A/RPC1, POLR3B/RPC2, POLR1C/RPAC1, POLR1D/RPAC2, POLR3K/RPC10, POLR2E/RPABC1, POLR2F/RPABC2, POLR2H/RPABC3, POLR2K/RPABC4 and POLR2L/RPABC5; a mobile stalk composed of two subunits POLR3H/RPC8 and CRCP/RPC9, protruding from the core and functioning primarily in transcription initiation; and additional subunits homologous to general transcription factors of the RNA polymerase II machinery, POLR3C/RPC3-POLR3F/RPC6-POLR3G/RPC7 heterotrimer required for transcription initiation and POLR3D/RPC4-POLR3E/RPC5 heterodimer involved in both transcription initiation and termination.

It is found in the nucleus. DNA-dependent RNA polymerase catalyzes the transcription of DNA into RNA using the four ribonucleoside triphosphates as substrates. Common component of RNA polymerases I and III which synthesize ribosomal RNA precursor pre-rRNA and short non-coding RNAs including 5S rRNA, snRNAs, tRNAs and miRNAs, respectively. This chain is DNA-directed RNA polymerases I and III subunit RPAC2 (POLR1D), found in Bos taurus (Bovine).